Here is a 467-residue protein sequence, read N- to C-terminus: MAPLMPVAVFGLEVPPGEILIPAASEFPAIIHITMAALDPTKAPEADGQGNIPALPRSTLKIIKATGHDHDDDDEEEDEYLQSLLGGGDSDDEANGGPSDPSKSKKAKQEAAIKKLMAATQEESDEEMEDAKPNGKKGKGKGKASESDEEESDEESDCCGDDDLQLEDYVVCTLDTERNYQQPINITIGEGEKVFFCVQGTHSVYLTGNFVVPEDDEEDSEDDEDESDDEDYDFPLGGEDDDSDDMSDELDELDGTPRVKEITSEDEEEEAPKLVDTSKKGKKRPAEDDAEGLDAMISKDDKKLSKKQQKKQKVEEAKKEEPKKETKSDKKVQFAKNLEQGPTGPAKDKLENKKPTSTVKVVQGVTIDDRKVGTGRAAKNGDRVGMRYIGKLQNGKVFDSNKKGAPFSFKLGKGEVIKGWDIGVAGMAVGGERRLTIPAHLAYGSRALPGIPPNSTLIFDVKLLEIK.

Disordered regions lie at residues 64–163 (KATG…GDDD) and 208–357 (GNFV…KPTS). Composition is skewed to acidic residues over residues 71–80 (DDDDEEEDEY), 147–163 (SDEE…GDDD), and 213–254 (PEDD…DELD). 2 stretches are compositionally biased toward basic and acidic residues: residues 271 to 287 (APKL…RPAE) and 312 to 332 (QKVE…DKKV). The region spanning 381-467 (GDRVGMRYIG…IFDVKLLEIK (87 aa)) is the PPIase FKBP-type domain.

The protein belongs to the FKBP-type PPIase family. FKBP3/4 subfamily. Binds to histones H3 and H4.

The protein resides in the nucleus. The enzyme catalyses [protein]-peptidylproline (omega=180) = [protein]-peptidylproline (omega=0). Its activity is regulated as follows. Inhibited by both FK506 and rapamycin. In terms of biological role, PPIase that acts as a histone chaperone. Histone proline isomerase that increases the rate of cis-trans isomerization at prolines on the histone H3 N-terminal tail. Proline isomerization influences H3 methylation thereby regulating gene expression. The protein is FK506-binding protein 4 (fkr-4) of Neurospora crassa (strain ATCC 24698 / 74-OR23-1A / CBS 708.71 / DSM 1257 / FGSC 987).